Consider the following 546-residue polypeptide: Zinc finger and BTB domain-containing protein 7A (546 aa).

The region spanning 34 to 101 is the BTB domain; the sequence is CDVVILVEGQ…AYTATLTVST (68 aa). Residues 189 to 288 form a disordered region; it reads QEDEEEPDCN…SFVPTGAEAE (100 aa). 3 consecutive C2H2-type zinc fingers follow at residues 359-381, 387-409, and 415-437; these read QKCP…IRTH, YECN…MRKH, and YLCQ…MRVH. The C2H2-type 4; atypical zinc finger occupies 443–467; the sequence is YQCDSCFKTFVRSDHLHRHLKKDGC. Residues 463-546 form a disordered region; it reads KKDGCNGIPS…AAEGSAPGPS (84 aa). The segment covering 534 to 546 has biased composition (low complexity); the sequence is AGGAAEGSAPGPS.

The protein resides in the nucleus. Transcription factor that represses the transcription of a wide range of genes involved in cell proliferation and differentiation. Directly and specifically binds to the consensus sequence 5'-[GA][CA]GACCCCCCCCC-3' and represses transcription both by regulating the organization of chromatin and through the direct recruitment of transcription factors to gene regulatory regions. May also play a role, independently of its transcriptional activity, in double-strand break repair via classical non-homologous end joining/cNHEJ and in alternative splicing. The chain is Zinc finger and BTB domain-containing protein 7A from Gallus gallus (Chicken).